Here is a 540-residue protein sequence, read N- to C-terminus: DEAD-box ATP-dependent RNA helicase 57 (540 aa).

The interval 24–73 (DFARFRQGPPAPDVASAAAPSPEKKRKRQSKAKAKKSKKRRAEGADSASD) is disordered. A compositionally biased stretch (basic residues) spans 47–64 (KKRKRQSKAKAKKSKKRR). Residues 101–129 (KSEDSEVVRRRKEVEREIERAAILRKKFD) are a coiled coil. A Q motif motif is present at residues 146-174 (ELVSRYGCDSYLVGNLSKLGFQEPTPIQR). The 171-residue stretch at 177–347 (IPILLSGREC…RTIMHDAVRV (171 aa)) folds into the Helicase ATP-binding domain. An ATP-binding site is contributed by 190 to 197 (APTGSGKT). The DEAD box motif lies at 294 to 297 (DESD). Residues 375–519 (ALRQSFAESL…EVPSWIKALP (145 aa)) enclose the Helicase C-terminal domain.

It belongs to the DEAD box helicase family. DDX52/ROK1 subfamily.

The enzyme catalyses ATP + H2O = ADP + phosphate + H(+). This Oryza sativa subsp. japonica (Rice) protein is DEAD-box ATP-dependent RNA helicase 57.